A 230-amino-acid polypeptide reads, in one-letter code: Heptaprenylglyceryl phosphate synthase (230 aa).

Lysine 12 contacts sn-glycerol 1-phosphate. Residues aspartate 14 and threonine 40 each coordinate Mg(2+). Residues 159-164 (YIEYSG), glycine 189, and 209-210 (GD) contribute to the sn-glycerol 1-phosphate site.

This sequence belongs to the GGGP/HepGP synthase family. Group I subfamily. Homodimer. Mg(2+) serves as cofactor.

It carries out the reaction sn-glycerol 1-phosphate + all-trans-heptaprenyl diphosphate = 3-heptaprenyl-sn-glycero-1-phosphate + diphosphate. It participates in membrane lipid metabolism; glycerophospholipid metabolism. Prenyltransferase that catalyzes in vivo the transfer of the heptaprenyl moiety of heptaprenyl pyrophosphate (HepPP; 35 carbon atoms) to the C3 hydroxyl of sn-glycerol-1-phosphate (G1P), producing heptaprenylglyceryl phosphate (HepGP). This reaction is an ether-bond-formation step in the biosynthesis of archaea-type G1P-based membrane lipids found in Bacillales. The chain is Heptaprenylglyceryl phosphate synthase from Staphylococcus aureus (strain JH1).